Reading from the N-terminus, the 143-residue chain is Small ribosomal subunit protein uS9 (143 aa).

Position 2 is an N-acetylserine (S2). Residues 123–143 (MPEPKKFGGKGARSRYQKSYR) form a disordered region. The span at 134 to 143 (ARSRYQKSYR) shows a compositional bias: basic residues.

This sequence belongs to the universal ribosomal protein uS9 family.

This chain is Small ribosomal subunit protein uS9 (RPS16), found in Maudiozyma exigua (Yeast).